A 198-amino-acid polypeptide reads, in one-letter code: ATP synthase protein MI25 (198 aa).

A helical membrane pass occupies residues 29–49 (ISIYNEEMIVALCFIGFIIFS).

This sequence belongs to the ATPase protein MI25 family. F-type ATPases have 2 components, CF(1) - the catalytic core - and CF(0) - the membrane proton channel. CF(1) has five subunits: alpha(3), beta(3), gamma(1), delta(1), epsilon(1). CF(0) has three main subunits: a, b and c.

Its subcellular location is the mitochondrion membrane. Its function is as follows. This is one of the chains of the nonenzymatic component (CF(0) subunit) of the mitochondrial ATPase complex. This Nicotiana tabacum (Common tobacco) protein is ATP synthase protein MI25.